Consider the following 130-residue polypeptide: uncharacterized protein (130 aa).

Residues Pro8–Tyr28 form a helical membrane-spanning segment.

It is found in the membrane. This is an uncharacterized protein from Bacillus anthracis.